Consider the following 652-residue polypeptide: Translation factor guf1, mitochondrial (652 aa).

The N-terminal 44 residues, 1-44 (MSIFRLSRTFSLETCLKSSSFKIRWRFFSVSYASRKLASEDNKP), are a transit peptide targeting the mitochondrion. Residues 56-237 (NRVRNWAVIA…EIIQKIPPPK (182 aa)) enclose the tr-type G domain. GTP contacts are provided by residues 65 to 72 (AHIDHGKS), 130 to 134 (DTPGH), and 184 to 187 (NKVD).

This sequence belongs to the TRAFAC class translation factor GTPase superfamily. Classic translation factor GTPase family. LepA subfamily.

It is found in the mitochondrion inner membrane. It catalyses the reaction GTP + H2O = GDP + phosphate + H(+). Its function is as follows. Promotes mitochondrial protein synthesis. May act as a fidelity factor of the translation reaction, by catalyzing a one-codon backward translocation of tRNAs on improperly translocated ribosomes. Binds to mitochondrial ribosomes in a GTP-dependent manner. This chain is Translation factor guf1, mitochondrial (guf1), found in Schizosaccharomyces pombe (strain 972 / ATCC 24843) (Fission yeast).